A 39-amino-acid polypeptide reads, in one-letter code: Cytochrome b559 subunit beta (39 aa).

Residues 14–30 (WLAVHGLAVPTVFFLGS) form a helical membrane-spanning segment. A heme-binding site is contributed by histidine 18.

Belongs to the PsbE/PsbF family. Heterodimer of an alpha subunit and a beta subunit. PSII is composed of 1 copy each of membrane proteins PsbA, PsbB, PsbC, PsbD, PsbE, PsbF, PsbH, PsbI, PsbJ, PsbK, PsbL, PsbM, PsbT, PsbX, PsbY, PsbZ, Psb30/Ycf12, at least 3 peripheral proteins of the oxygen-evolving complex and a large number of cofactors. It forms dimeric complexes. Heme b is required as a cofactor.

The protein resides in the plastid. It is found in the chloroplast thylakoid membrane. This b-type cytochrome is tightly associated with the reaction center of photosystem II (PSII). PSII is a light-driven water:plastoquinone oxidoreductase that uses light energy to abstract electrons from H(2)O, generating O(2) and a proton gradient subsequently used for ATP formation. It consists of a core antenna complex that captures photons, and an electron transfer chain that converts photonic excitation into a charge separation. This is Cytochrome b559 subunit beta from Welwitschia mirabilis (Tree tumbo).